A 462-amino-acid polypeptide reads, in one-letter code: Phosphoglucosamine mutase (462 aa).

The active-site Phosphoserine intermediate is the serine 111. 4 residues coordinate Mg(2+): serine 111, aspartate 250, aspartate 252, and aspartate 254. Serine 111 carries the phosphoserine modification.

Belongs to the phosphohexose mutase family. It depends on Mg(2+) as a cofactor. Activated by phosphorylation.

It catalyses the reaction alpha-D-glucosamine 1-phosphate = D-glucosamine 6-phosphate. Catalyzes the conversion of glucosamine-6-phosphate to glucosamine-1-phosphate. This is Phosphoglucosamine mutase from Synechococcus sp. (strain WH7803).